Reading from the N-terminus, the 642-residue chain is Threonine--tRNA ligase (642 aa).

Positions 1–61 (MPVITLPDGS…ETDSTLSIIT (61 aa)) constitute a TGS domain. The catalytic stretch occupies residues 243–534 (DHRKIGKQLD…LTEEFAGFFP (292 aa)). Zn(2+) is bound by residues Cys334, His385, and His511.

This sequence belongs to the class-II aminoacyl-tRNA synthetase family. Homodimer. The cofactor is Zn(2+).

The protein localises to the cytoplasm. It catalyses the reaction tRNA(Thr) + L-threonine + ATP = L-threonyl-tRNA(Thr) + AMP + diphosphate + H(+). Its function is as follows. Catalyzes the attachment of threonine to tRNA(Thr) in a two-step reaction: L-threonine is first activated by ATP to form Thr-AMP and then transferred to the acceptor end of tRNA(Thr). Also edits incorrectly charged L-seryl-tRNA(Thr). This is Threonine--tRNA ligase from Klebsiella pneumoniae (strain 342).